The sequence spans 463 residues: Glycine--tRNA ligase (463 aa).

Residues R100 and E175 each coordinate substrate. Residues R207–E209, F217–F222, E291–L292, and G335–R338 contribute to the ATP site. Residue F222–E226 coordinates substrate. E331–G335 contributes to the substrate binding site.

Belongs to the class-II aminoacyl-tRNA synthetase family. In terms of assembly, homodimer.

It localises to the cytoplasm. The enzyme catalyses tRNA(Gly) + glycine + ATP = glycyl-tRNA(Gly) + AMP + diphosphate. Its function is as follows. Catalyzes the attachment of glycine to tRNA(Gly). The sequence is that of Glycine--tRNA ligase from Clostridium beijerinckii (strain ATCC 51743 / NCIMB 8052) (Clostridium acetobutylicum).